We begin with the raw amino-acid sequence, 292 residues long: Xyloglucan endotransglucosylase/hydrolase protein A (292 aa).

An N-terminal signal peptide occupies residues 1-20 (MGSSLWTCLILLSLASASFA). Residues 21-219 (ANPRTPIDVP…WSKAPFIASY (199 aa)) enclose the GH16 domain. Glutamate 105 serves as the catalytic Nucleophile. Glutamate 109 serves as the catalytic Proton donor. A xyloglucan-binding site is contributed by glutamate 109. Residue asparagine 113 is glycosylated (N-linked (GlcNAc...) asparagine). Residues 122 to 124 (QTN), 132 to 134 (DRE), 198 to 199 (DW), and glycine 203 each bind xyloglucan. 2 disulfide bridges follow: cysteine 227-cysteine 236 and cysteine 273-cysteine 286. Arginine 278 provides a ligand contact to xyloglucan.

The protein belongs to the glycosyl hydrolase 16 family. XTH group 1 subfamily. In terms of processing, contains at least one intrachain disulfide bond essential for its enzymatic activity. In terms of tissue distribution, predominantly expressed in the phloem fibers of growing internodes. Expressed in xylem cells in the basal part of the internode. In the internode, it is expressed closer to the top of the internode compared to XTHB.

Its subcellular location is the secreted. The protein resides in the cell wall. It is found in the extracellular space. It localises to the apoplast. It catalyses the reaction breaks a beta-(1-&gt;4) bond in the backbone of a xyloglucan and transfers the xyloglucanyl segment on to O-4 of the non-reducing terminal glucose residue of an acceptor, which can be a xyloglucan or an oligosaccharide of xyloglucan.. Catalyzes xyloglucan endohydrolysis (XEH) and/or endotransglycosylation (XET). Cleaves and religates xyloglucan polymers, an essential constituent of the primary cell wall, and thereby participates in cell wall construction of growing tissues. The polypeptide is Xyloglucan endotransglucosylase/hydrolase protein A (XTHA) (Phaseolus angularis (Azuki bean)).